Reading from the N-terminus, the 238-residue chain is Uridylate kinase (238 aa).

12–15 (KLSG) lines the ATP pocket. The interval 20 to 25 (GQQGFG) is involved in allosteric activation by GTP. Gly54 provides a ligand contact to UMP. Gly55 and Arg59 together coordinate ATP. UMP-binding positions include Asp74 and 135 to 142 (TGNPFFTT). Residues Thr162, Asn163, Tyr168, and Asp171 each coordinate ATP.

Belongs to the UMP kinase family. In terms of assembly, homohexamer.

The protein localises to the cytoplasm. The catalysed reaction is UMP + ATP = UDP + ADP. It participates in pyrimidine metabolism; CTP biosynthesis via de novo pathway; UDP from UMP (UMPK route): step 1/1. Allosterically activated by GTP. Inhibited by UTP. In terms of biological role, catalyzes the reversible phosphorylation of UMP to UDP. In Bradyrhizobium diazoefficiens (strain JCM 10833 / BCRC 13528 / IAM 13628 / NBRC 14792 / USDA 110), this protein is Uridylate kinase.